Consider the following 68-residue polypeptide: Negative regulator of P-body association (68 aa).

A disordered region spans residues 1–68 (MGDQPCASGR…LKSHPPPPEK (68 aa)).

As to quaternary structure, interacts with mRNA decapping proteins DCP1A, DCP2 and EDC4.

The protein localises to the cytoplasm. It is found in the P-body. Promotes dispersal of P-body components and is likely to play a role in the mRNA decapping process. This Homo sapiens (Human) protein is Negative regulator of P-body association.